Consider the following 721-residue polypeptide: Catalase-peroxidase 1 (721 aa).

Positions 98 to 223 form a cross-link, tryptophyl-tyrosyl-methioninium (Trp-Tyr) (with M-249); that stretch reads WHAAGSYRVA…LAAVQMGLIY (126 aa). The Proton acceptor role is filled by histidine 99. Positions 223-249 form a cross-link, tryptophyl-tyrosyl-methioninium (Tyr-Met) (with W-98); that stretch reads YVNPEGVNGQPDPLRTAQDVRVTFGRM. Histidine 264 serves as a coordination point for heme b.

Belongs to the peroxidase family. Peroxidase/catalase subfamily. As to quaternary structure, homodimer or homotetramer. It depends on heme b as a cofactor. In terms of processing, formation of the three residue Trp-Tyr-Met cross-link is important for the catalase, but not the peroxidase activity of the enzyme.

It carries out the reaction H2O2 + AH2 = A + 2 H2O. It catalyses the reaction 2 H2O2 = O2 + 2 H2O. Bifunctional enzyme with both catalase and broad-spectrum peroxidase activity. This chain is Catalase-peroxidase 1, found in Legionella pneumophila (strain Paris).